Here is a 238-residue protein sequence, read N- to C-terminus: uncharacterized protein (238 aa).

A run of 7 helical transmembrane segments spans residues 22-42 (VYGW…GLYA), 49-69 (LFSL…YIQA), 78-98 (AVMG…GTMV), 105-125 (FGGG…GLSA), 141-161 (ILML…VVSL), 166-186 (PLMY…LTVV), and 208-228 (LSLI…WYLL).

The protein belongs to the BI1 family.

It localises to the cell membrane. This is an uncharacterized protein from Chlamydia muridarum (strain MoPn / Nigg).